The chain runs to 298 residues: ADP/ATP translocase 3 (298 aa).

M1 bears the N-acetylmethionine mark. The Mitochondrial intermembrane portion of the chain corresponds to 1–7; that stretch reads MTEQAIS. T2 is modified (N-acetylthreonine; in ADP/ATP translocase 3, N-terminally processed). Residues 6–98 form a Solcar 1 repeat; the sequence is ISFAKDFLAG…FAFKDKYKQI (93 aa). A helical transmembrane segment spans residues 8–37; the sequence is FAKDFLAGGIAAAISKTAVAPIERVKLLLQ. At 38 to 74 the chain is on the mitochondrial matrix side; sequence VQHASKQIAADKQYKGIVDCIVRIPKEQGVLSFWRGN. At K52 the chain carries N6,N6,N6-trimethyllysine. A helical transmembrane segment spans residues 75-99; that stretch reads LANVIRYFPTQALNFAFKDKYKQIF. 2 residues coordinate ADP: R80 and K92. Residues 100–109 are Mitochondrial intermembrane-facing; it reads LGGVDKRTQF. K105 is modified (N6-acetyllysine). Residues 110–130 traverse the membrane as a helical segment; the sequence is WRYFAGNLASGGAAGATSLCF. Solcar repeat units lie at residues 111-201 and 212-297; these read RYFA…AKGM and VSWM…LKKV. Over 131-178 the chain is Mitochondrial matrix; the sequence is VYPLDFARTRLAADVGKSGSEREFRGLGDCLVKITKSDGIRGLYQGFN. The chain crosses the membrane as a helical span at residues 179 to 199; it reads VSVQGIIIYRAAYFGIYDTAK. Residues 200–210 lie on the Mitochondrial intermembrane side of the membrane; it reads GMLPDPKNTHI. A helical membrane pass occupies residues 211–231; sequence VVSWMIAQTVTAVAGVVSYPF. Residues 232–273 lie on the Mitochondrial matrix side of the membrane; sequence DTVRRRMMMQSGRKGADIMYKGTVDCWRKILKDEGGKAFFKG. Residue R235 coordinates ADP. Residues 235–240 form an important for transport activity region; the sequence is RRRMMM. A Nucleotide carrier signature motif motif is present at residues 235-240; sequence RRRMMM. Position 268 is an N6-acetyllysine (K268). A helical membrane pass occupies residues 274–291; it reads AWSNVLRGMGGAFVLVLY. Residues 292-298 are Mitochondrial intermembrane-facing; the sequence is DELKKVI.

It belongs to the mitochondrial carrier (TC 2.A.29) family. As to quaternary structure, monomer. Found in a complex with ARL2, ARL2BP and SLC25A6/ANT3. In terms of processing, trimethylated by ANTKMT at Lys-52.

It is found in the mitochondrion inner membrane. The protein localises to the membrane. It carries out the reaction ADP(in) + ATP(out) = ADP(out) + ATP(in). The enzyme catalyses H(+)(in) = H(+)(out). With respect to regulation, the matrix-open state (m-state) is inhibited by the membrane-permeable bongkrekic acid (BKA). The cytoplasmic-open state (c-state) is inhibited by the membrane-impermeable toxic inhibitor carboxyatractyloside (CATR). Proton transporter activity is inhibited by ADP:ATP antiporter activity. In terms of biological role, ADP:ATP antiporter that mediates import of ADP into the mitochondrial matrix for ATP synthesis, and export of ATP out to fuel the cell. Cycles between the cytoplasmic-open state (c-state) and the matrix-open state (m-state): operates by the alternating access mechanism with a single substrate-binding site intermittently exposed to either the cytosolic (c-state) or matrix (m-state) side of the inner mitochondrial membrane. In addition to its ADP:ATP antiporter activity, also involved in mitochondrial uncoupling and mitochondrial permeability transition pore (mPTP) activity. Plays a role in mitochondrial uncoupling by acting as a proton transporter: proton transport uncouples the proton flows via the electron transport chain and ATP synthase to reduce the efficiency of ATP production and cause mitochondrial thermogenesis. Proton transporter activity is inhibited by ADP:ATP antiporter activity, suggesting that SLC25A6/ANT3 acts as a master regulator of mitochondrial energy output by maintaining a delicate balance between ATP production (ADP:ATP antiporter activity) and thermogenesis (proton transporter activity). Proton transporter activity requires free fatty acids as cofactor, but does not transport it. Also plays a key role in mPTP opening, a non-specific pore that enables free passage of the mitochondrial membranes to solutes of up to 1.5 kDa, and which contributes to cell death. It is however unclear if SLC25A6/ANT3 constitutes a pore-forming component of mPTP or regulates it. The protein is ADP/ATP translocase 3 of Bos taurus (Bovine).